We begin with the raw amino-acid sequence, 371 residues long: DNA replication and repair protein RecF (371 aa).

Position 30 to 37 (30 to 37 (GQNGSGKT)) interacts with ATP.

This sequence belongs to the RecF family.

The protein resides in the cytoplasm. Functionally, the RecF protein is involved in DNA metabolism; it is required for DNA replication and normal SOS inducibility. RecF binds preferentially to single-stranded, linear DNA. It also seems to bind ATP. In Chlorobium phaeovibrioides (strain DSM 265 / 1930) (Prosthecochloris vibrioformis (strain DSM 265)), this protein is DNA replication and repair protein RecF.